The following is an 86-amino-acid chain: Anti-adapter protein IraP (86 aa).

Residues Met1–Met36 are a coiled coil.

Belongs to the IraP family. In terms of assembly, interacts with RssB.

It is found in the cytoplasm. Inhibits RpoS proteolysis by regulating RssB activity, thereby increasing the stability of the sigma stress factor RpoS especially during phosphate starvation, but also in stationary phase and during nitrogen starvation. Its effect on RpoS stability is due to its interaction with RssB, which probably blocks the interaction of RssB with RpoS, and the consequent delivery of the RssB-RpoS complex to the ClpXP protein degradation pathway. In Citrobacter koseri (strain ATCC BAA-895 / CDC 4225-83 / SGSC4696), this protein is Anti-adapter protein IraP.